Reading from the N-terminus, the 282-residue chain is Shikimate dehydrogenase (NADP(+)) (282 aa).

Shikimate-binding positions include 19–21 and T66; that span reads TQS. K70 acts as the Proton acceptor in catalysis. The shikimate site is built by N91 and D107. NADP(+) is bound by residues 132-136, 155-160, I224, and G246; these read GAGGA and NRTITR.

It belongs to the shikimate dehydrogenase family. Homodimer.

It carries out the reaction shikimate + NADP(+) = 3-dehydroshikimate + NADPH + H(+). The protein operates within metabolic intermediate biosynthesis; chorismate biosynthesis; chorismate from D-erythrose 4-phosphate and phosphoenolpyruvate: step 4/7. Its function is as follows. Involved in the biosynthesis of the chorismate, which leads to the biosynthesis of aromatic amino acids. Catalyzes the reversible NADPH linked reduction of 3-dehydroshikimate (DHSA) to yield shikimate (SA). This Buchnera aphidicola subsp. Baizongia pistaciae (strain Bp) protein is Shikimate dehydrogenase (NADP(+)).